The following is a 256-amino-acid chain: Enkurin (256 aa).

The SH3-binding motif lies at 83 to 89; it reads PKKPAVP. Residues 160-252 form the Enkurin domain; sequence KRNEEIKKAQ…IIEKHKIIYI (93 aa). The interval 160–255 is interaction with TRPC proteins; it reads KRNEEIKKAQ…KHKIIYIANN (96 aa). The IQ domain maps to 176–187; sequence IQENLKKAAMKR.

In terms of assembly, microtubule inner protein component of sperm flagellar doublet microtubules. Binds calmodulin via its IQ domain. Interacts with TRPC1, TRPC2, TRPC5, but not TRPC3. Interacts with CFAP45. Expressed in airway epithelial cells.

It is found in the cytoplasm. Its subcellular location is the cytoskeleton. The protein resides in the cilium axoneme. The protein localises to the flagellum axoneme. In terms of biological role, adapter that functions to localize a calcium-sensitive signal transduction machinery in sperm to a calcium-permeable ion channel. Microtubule inner protein (MIP) part of the dynein-decorated doublet microtubules (DMTs) in cilia axoneme, which is required for motile cilia beating. This is Enkurin from Homo sapiens (Human).